Consider the following 468-residue polypeptide: IQ domain-containing protein C (468 aa).

The IQ domain occupies 6-35; that stretch reads LVLKVTALQACIRGFLVRRQFQSLRGEYEA. Disordered regions lie at residues 113–157, 202–245, and 329–468; these read NASS…GPGL, EVNQ…PGEP, and SHKE…GPAG. A compositionally biased stretch (basic and acidic residues) spans 139-150; that stretch reads QETRDVSRKNDP. A compositionally biased stretch (basic and acidic residues) spans 415–426; it reads SSIERSPSESSH.

In Bos taurus (Bovine), this protein is IQ domain-containing protein C (IQCC).